The sequence spans 284 residues: uncharacterized protein (284 aa).

A signal peptide spans 1-23 (MKRGCAIAVMICGLITSVSAASA).

Belongs to the surface antigen msp4 family.

This is an uncharacterized protein from Brucella abortus (strain 2308).